The following is a 46-amino-acid chain: Bacteriocin acidocin 8912 (46 aa).

Residues 1 to 20 (MISSHQKTLTDKELALISGG) constitute a propeptide that is removed on maturation.

The protein resides in the secreted. Its function is as follows. Has a bactericidal effect on sensitive cells but not a bacteriolytic effect. This is Bacteriocin acidocin 8912 (acdT) from Lactobacillus acidophilus.